A 119-amino-acid polypeptide reads, in one-letter code: MITKIDKNKVRKKRHARVRSKISGTESRPRLNVFRSNKNIYAQVIDDVNGVTLASASNLDKDFGSAESKVDAASKVGELVAKRASEKGITSVTFDRGGYLYHGRVKALAEAARENGLEF.

The disordered stretch occupies residues 1–25; sequence MITKIDKNKVRKKRHARVRSKISGT. Positions 9-20 are enriched in basic residues; sequence KVRKKRHARVRS.

It belongs to the universal ribosomal protein uL18 family. As to quaternary structure, part of the 50S ribosomal subunit; part of the 5S rRNA/L5/L18/L25 subcomplex. Contacts the 5S and 23S rRNAs.

In terms of biological role, this is one of the proteins that bind and probably mediate the attachment of the 5S RNA into the large ribosomal subunit, where it forms part of the central protuberance. This is Large ribosomal subunit protein uL18 from Listeria innocua serovar 6a (strain ATCC BAA-680 / CLIP 11262).